A 223-amino-acid polypeptide reads, in one-letter code: Small ribosomal subunit protein uS5 (223 aa).

Over residues 1 to 15 the composition is skewed to low complexity; the sequence is MTEAVAAEATETAPA. Residues 1–51 form a disordered region; sequence MTEAVAAEATETAPATDDRRGGRRGERGDRGQGRGDRGGRGGRDGGREAEK. Over residues 16–51 the composition is skewed to basic and acidic residues; sequence TDDRRGGRRGERGDRGQGRGDRGGRGGRDGGREAEK. The S5 DRBM domain maps to 54-117; that stretch reads FVERVVTINR…EEAKKSFFRV (64 aa).

Belongs to the universal ribosomal protein uS5 family. Part of the 30S ribosomal subunit. Contacts proteins S4 and S8.

In terms of biological role, with S4 and S12 plays an important role in translational accuracy. Located at the back of the 30S subunit body where it stabilizes the conformation of the head with respect to the body. The chain is Small ribosomal subunit protein uS5 from Paenarthrobacter aurescens (strain TC1).